Reading from the N-terminus, the 439-residue chain is Serine/threonine-protein kinase 2 (439 aa).

The region spanning 87–439 (NDDFYHISTG…IFSDWINGGN (353 aa)) is the Protein kinase domain. Residues 93–101 (ISTGGYGIV) and K117 each bind ATP. The Proton acceptor role is filled by D307.

This sequence belongs to the protein kinase superfamily. Ser/Thr protein kinase family. Phosphorylated in vivo. Autophosphorylated in vitro.

The protein resides in the host endoplasmic reticulum. It is found in the host endoplasmic reticulum-Golgi intermediate compartment. It carries out the reaction L-seryl-[protein] + ATP = O-phospho-L-seryl-[protein] + ADP + H(+). The catalysed reaction is L-threonyl-[protein] + ATP = O-phospho-L-threonyl-[protein] + ADP + H(+). In terms of biological role, essential serine-protein kinase involved in the early stage of virion morphogenesis. This is Serine/threonine-protein kinase 2 (OPG054) from Bos taurus (Bovine).